We begin with the raw amino-acid sequence, 177 residues long: Small ribosomal subunit protein uS5 (177 aa).

The 64-residue stretch at 21–84 (LKEKMVSVNR…DEARQRMVRV (64 aa)) folds into the S5 DRBM domain.

This sequence belongs to the universal ribosomal protein uS5 family. Part of the 30S ribosomal subunit. Contacts proteins S4 and S8.

With S4 and S12 plays an important role in translational accuracy. Functionally, located at the back of the 30S subunit body where it stabilizes the conformation of the head with respect to the body. In Nitrosomonas europaea (strain ATCC 19718 / CIP 103999 / KCTC 2705 / NBRC 14298), this protein is Small ribosomal subunit protein uS5.